The chain runs to 264 residues: Apolipoprotein A-I (264 aa).

A signal peptide spans Met1–Ala18. 2 repeat units span residues Leu67 to Gly88 and Pro89 to Asn110. The interval Leu67 to Gln264 is 10 X approximate tandem repeats. Residue Met109 is modified to Methionine sulfoxide. A 3; half-length repeat occupies Lys111–Gln121. 3 tandem repeats follow at residues Pro122–Glu143, Pro144–Ser165, and Pro166–Ala187. Residues Pro188–Ser207 form a 7; truncated repeat. Residues Ser208–Lys229 form repeat 8. The 9; half-length repeat unit spans residues Pro230 to Leu240. Residues Pro241–Gln264 form repeat 10.

This sequence belongs to the apolipoprotein A1/A4/E family. As to quaternary structure, homodimer. Interacts with APOA1BP and CLU. Component of a sperm activating protein complex (SPAP), consisting of APOA1, an immunoglobulin heavy chain, an immunoglobulin light chain and albumin. Interacts with NDRG1. Interacts with SCGB3A2. Interacts with NAXE and YJEFN3. Post-translationally, glycosylated. Palmitoylated. In terms of processing, phosphorylation sites are present in the extracellular medium.

It localises to the secreted. Functionally, participates in the reverse transport of cholesterol from tissues to the liver for excretion by promoting cholesterol efflux from tissues and by acting as a cofactor for the lecithin cholesterol acyltransferase (LCAT). As part of the SPAP complex, activates spermatozoa motility. This chain is Apolipoprotein A-I (ApoA1), found in Marmota monax (Woodchuck).